A 126-amino-acid polypeptide reads, in one-letter code: Methylglyoxal synthase (126 aa).

The MGS-like domain occupies 1–126 (MEKKIALIAH…LIKGLESLIF (126 aa)). Residues H10, K14, 36 to 39 (TGTT), and 56 to 57 (SG) each bind substrate. D62 serves as the catalytic Proton donor/acceptor. H89 serves as a coordination point for substrate.

Belongs to the methylglyoxal synthase family.

It catalyses the reaction dihydroxyacetone phosphate = methylglyoxal + phosphate. Its function is as follows. Catalyzes the formation of methylglyoxal from dihydroxyacetone phosphate. The protein is Methylglyoxal synthase of Borreliella burgdorferi (strain ATCC 35210 / DSM 4680 / CIP 102532 / B31) (Borrelia burgdorferi).